The primary structure comprises 105 residues: Thioredoxin (105 aa).

Positions 2–105 constitute a Thioredoxin domain; the sequence is VKQIESKYAF…KLEATINELI (104 aa). Lys3 is modified (N6-acetyllysine). Lys8 carries the N6-succinyllysine modification. Catalysis depends on nucleophile residues Cys32 and Cys35. An intrachain disulfide couples Cys32 to Cys35. The residue at position 39 (Lys39) is an N6-acetyllysine. An S-nitrosocysteine mark is found at Cys62 and Cys69. At Cys73 the chain carries S-nitrosocysteine; alternate. Lys94 is modified (N6-acetyllysine; alternate). Lys94 is subject to N6-succinyllysine; alternate.

This sequence belongs to the thioredoxin family. As to quaternary structure, homodimer; disulfide-linked. Interacts with TXNIP through the redox-active site. Interacts with MAP3K5 and CASP3. Interacts with APEX1; the interaction stimulates the FOS/JUN AP-1 DNA-binding activity in a redox-dependent manner. In the fully reduced protein, both Cys-69 and Cys-73 are nitrosylated in response to nitric oxide (NO). When two disulfide bonds are present in the protein, only Cys-73 is nitrosylated. Cys-73 can serve as donor for nitrosylation of target proteins.

The protein localises to the nucleus. Its subcellular location is the cytoplasm. It is found in the secreted. Functionally, participates in various redox reactions through the reversible oxidation of its active center dithiol to a disulfide and catalyzes dithiol-disulfide exchange reactions. Plays a role in the reversible S-nitrosylation of cysteine residues in target proteins, and thereby contributes to the response to intracellular nitric oxide. Nitrosylates the active site Cys of CASP3 in response to nitric oxide (NO), and thereby inhibits caspase-3 activity. Induces the FOS/JUN AP-1 DNA binding activity in ionizing radiation (IR) cells through its oxidation/reduction status and stimulates AP-1 transcriptional activity. In Ovis aries (Sheep), this protein is Thioredoxin (TXN).